Reading from the N-terminus, the 605-residue chain is Isocitrate dehydrogenase kinase/phosphatase (605 aa).

ATP is bound by residues 327–333 and K348; that span reads APGIKGL. D383 is a catalytic residue.

Belongs to the AceK family.

It localises to the cytoplasm. The enzyme catalyses L-seryl-[isocitrate dehydrogenase] + ATP = O-phospho-L-seryl-[isocitrate dehydrogenase] + ADP + H(+). In terms of biological role, bifunctional enzyme which can phosphorylate or dephosphorylate isocitrate dehydrogenase (IDH) on a specific serine residue. This is a regulatory mechanism which enables bacteria to bypass the Krebs cycle via the glyoxylate shunt in response to the source of carbon. When bacteria are grown on glucose, IDH is fully active and unphosphorylated, but when grown on acetate or ethanol, the activity of IDH declines drastically concomitant with its phosphorylation. In Burkholderia multivorans (strain ATCC 17616 / 249), this protein is Isocitrate dehydrogenase kinase/phosphatase.